Consider the following 342-residue polypeptide: Isopentenyl-diphosphate delta-isomerase (342 aa).

Residue 11 to 12 participates in substrate binding; that stretch reads RK. Residues Ser-68, 69–71, Ser-99, and Asn-128 contribute to the FMN site; that span reads SMT. Position 99-101 (99-101) interacts with substrate; sequence SQR. Gln-162 serves as a coordination point for substrate. Glu-163 is a binding site for Mg(2+). FMN is bound by residues Lys-194, Ser-219, Thr-224, 275–277, and 296–297; these read GVR and AK.

The protein belongs to the IPP isomerase type 2 family. Homooctamer. Dimer of tetramers. Requires FMN as cofactor. The cofactor is NADPH. Mg(2+) is required as a cofactor.

The protein resides in the cytoplasm. The catalysed reaction is isopentenyl diphosphate = dimethylallyl diphosphate. In terms of biological role, involved in the biosynthesis of isoprenoids. Catalyzes the 1,3-allylic rearrangement of the homoallylic substrate isopentenyl (IPP) to its allylic isomer, dimethylallyl diphosphate (DMAPP). The protein is Isopentenyl-diphosphate delta-isomerase of Legionella pneumophila subsp. pneumophila (strain Philadelphia 1 / ATCC 33152 / DSM 7513).